A 556-amino-acid chain; its full sequence is Glutamine--tRNA ligase (556 aa).

Residues Pro34–His44 carry the 'HIGH' region motif. ATP-binding positions include Glu35–Asn37 and His41–Ser47. Positions 67 and 212 each coordinate L-glutamine. Residues Thr231, Arg263–Leu264, and Met271–Lys273 each bind ATP. Residues Val270–Arg274 carry the 'KMSKS' region motif.

It belongs to the class-I aminoacyl-tRNA synthetase family. Monomer.

The protein resides in the cytoplasm. It carries out the reaction tRNA(Gln) + L-glutamine + ATP = L-glutaminyl-tRNA(Gln) + AMP + diphosphate. The protein is Glutamine--tRNA ligase of Nitrosomonas europaea (strain ATCC 19718 / CIP 103999 / KCTC 2705 / NBRC 14298).